Reading from the N-terminus, the 610-residue chain is Mitochondrial import receptor subunit TOM70 (610 aa).

At alanine 2 the chain carries N-acetylalanine. The Mitochondrial intermembrane portion of the chain corresponds to 2 to 41; it reads AASKPVEAAMAAAAAPASGNGVGSSGGTAAPGSGAGTLPR. A helical membrane pass occupies residues 42–62; the sequence is WHVALAIGAPLLLGAGAMYLW. Topologically, residues 63 to 610 are cytoplasmic; the sequence is SRRRRRREAG…KKYGLKPPTL (548 aa). Residues 69-109 form a disordered region; the sequence is REAGGRGDASGLKRNSERKTPEGRASPALGSGPDGSGDSLE. An Omega-N-methylarginine modification is found at arginine 74. A compositionally biased stretch (low complexity) spans 93–108; that stretch reads ASPALGSGPDGSGDSL. Serine 94, serine 99, serine 104, serine 107, and serine 112 each carry phosphoserine. 2 TPR repeats span residues 116–149 and 155–188; these read AQAAKNKGNKYFKAGKYEQAIQCYTEAISLCPTE and STFYQNRAAAFEQLQKWKEVAQDCTKAVELNPKY. Lysine 187 is subject to N6-acetyllysine. Residue lysine 277 forms a Glycyl lysine isopeptide (Lys-Gly) (interchain with G-Cter in SUMO2) linkage. TPR repeat units lie at residues 296–329, 331–364, 369–402, 403–436, 444–477, 478–511, 513–546, and 547–580; these read ENSGYLKAKQYMEEENYDKIISECSKEIDAQGKY, AEALLLRATFYLLIGSANAAKPDLDKVISLKEAN, ANALIKRGTMCMQQQQPMLSTQDFNMAAEIDPMN, SDVYHHRGQLKILLDLVEEAVADFDACIRLRPKF, CFALYRQAYTANNSSQVQAAMKGFEEVIKKFPRC, AEGYALYAQALTDQQQFGKADEMYDKCIDLEPDN, TTYVHKGLLQLQWKQDLDKGLELISKAIEIDNKC, and DFAYETMGTIEVQRGNMEKAIDMFNKAINLAKSE.

Belongs to the Tom70 family. As to quaternary structure, forms part of the preprotein translocase complex of the outer mitochondrial membrane (TOM complex) which consists of at least 7 different proteins (TOMM5, TOMM6, TOMM7, TOMM20, TOMM22, TOMM40 and TOMM70). Interacts with CAPN8. Interacts with TRADD, TRAF6 and STING. Interacts with MAVS. Interacts with HSPA8 and HSP90AA1; both interactions are required for preprotein mitochondrial import. The interaction with HSP90AA1 is direct and mediates the association of TOMM70 with IRF3 and TBK1. Upon mitochondrial depolarization, interacts with PINK1; the interaction is required for PINK1-TOM-TIM23 supercomplex formation which is critical for PINK1 stabilization at the outer mitochondrial membrane, kinase activation and downstream mitophagy.

It is found in the mitochondrion outer membrane. Its function is as follows. Acts as a receptor of the preprotein translocase complex of the outer mitochondrial membrane (TOM complex). Recognizes and mediates the translocation of mitochondrial preproteins from the cytosol into the mitochondria in a chaperone dependent manner. Mediates TBK1 and IRF3 activation induced by MAVS in response to Sendai virus infection and promotes host antiviral responses during virus infection. In Rattus norvegicus (Rat), this protein is Mitochondrial import receptor subunit TOM70.